The primary structure comprises 234 residues: Small ribosomal subunit protein uS2c (234 aa).

It belongs to the universal ribosomal protein uS2 family.

It is found in the plastid. The protein localises to the chloroplast. This is Small ribosomal subunit protein uS2c (rps2) from Pinus koraiensis (Korean pine).